Here is a 147-residue protein sequence, read N- to C-terminus: Large ribosomal subunit protein uL15 (147 aa).

The disordered stretch occupies residues 1-58 (MKLFELKPAPGAKKRPKRVGRGESSGHGKTSTRGHKGQWARSGGGVRPGFEGGQMPLT). Gly residues predominate over residues 42–52 (SGGGVRPGFEG).

This sequence belongs to the universal ribosomal protein uL15 family. Part of the 50S ribosomal subunit.

Its function is as follows. Binds to the 23S rRNA. This chain is Large ribosomal subunit protein uL15, found in Caldicellulosiruptor saccharolyticus (strain ATCC 43494 / DSM 8903 / Tp8T 6331).